A 260-amino-acid polypeptide reads, in one-letter code: 3'-5' ssDNA/RNA exonuclease TatD (260 aa).

A divalent metal cation is bound by residues E92, H128, and H153.

This sequence belongs to the metallo-dependent hydrolases superfamily. TatD-type hydrolase family. TatD subfamily. As to quaternary structure, monomer. The cofactor is Mg(2+).

Its subcellular location is the cytoplasm. Its function is as follows. 3'-5' exonuclease that prefers single-stranded DNA and RNA. May play a role in the H(2)O(2)-induced DNA damage repair. In Yersinia pseudotuberculosis serotype O:3 (strain YPIII), this protein is 3'-5' ssDNA/RNA exonuclease TatD.